The primary structure comprises 231 residues: Aspartate/glutamate leucyltransferase (231 aa).

It belongs to the R-transferase family. Bpt subfamily.

The protein resides in the cytoplasm. The enzyme catalyses N-terminal L-glutamyl-[protein] + L-leucyl-tRNA(Leu) = N-terminal L-leucyl-L-glutamyl-[protein] + tRNA(Leu) + H(+). It catalyses the reaction N-terminal L-aspartyl-[protein] + L-leucyl-tRNA(Leu) = N-terminal L-leucyl-L-aspartyl-[protein] + tRNA(Leu) + H(+). Functionally, functions in the N-end rule pathway of protein degradation where it conjugates Leu from its aminoacyl-tRNA to the N-termini of proteins containing an N-terminal aspartate or glutamate. The polypeptide is Aspartate/glutamate leucyltransferase (Pseudoalteromonas atlantica (strain T6c / ATCC BAA-1087)).